The sequence spans 99 residues: Plastocyanin (99 aa).

In terms of domain architecture, Plastocyanin-like spans 1–99; it reads IEVLLGGGDG…AGMVGKVTVN (99 aa). Cu cation-binding residues include H37, C84, H87, and M92.

This sequence belongs to the plastocyanin family. Cu(2+) serves as cofactor.

The protein localises to the plastid. The protein resides in the chloroplast thylakoid membrane. Participates in electron transfer between P700 and the cytochrome b6-f complex in photosystem I. This is Plastocyanin (PETE) from Capsella bursa-pastoris (Shepherd's purse).